The chain runs to 194 residues: 7-methyl-GTP pyrophosphatase (194 aa).

Residue Asp70 is the Proton acceptor of the active site.

It belongs to the Maf family. YceF subfamily. Requires a divalent metal cation as cofactor.

The protein resides in the cytoplasm. The catalysed reaction is N(7)-methyl-GTP + H2O = N(7)-methyl-GMP + diphosphate + H(+). In terms of biological role, nucleoside triphosphate pyrophosphatase that hydrolyzes 7-methyl-GTP (m(7)GTP). May have a dual role in cell division arrest and in preventing the incorporation of modified nucleotides into cellular nucleic acids. The sequence is that of 7-methyl-GTP pyrophosphatase from Ralstonia nicotianae (strain ATCC BAA-1114 / GMI1000) (Ralstonia solanacearum).